Reading from the N-terminus, the 252-residue chain is Phosphate import ATP-binding protein PstB (252 aa).

In terms of domain architecture, ABC transporter spans 5–247 (VKIDKLNVHF…PEKKQTEDYI (243 aa)). An ATP-binding site is contributed by 37–44 (GPSGCGKS).

It belongs to the ABC transporter superfamily. Phosphate importer (TC 3.A.1.7) family. The complex is composed of two ATP-binding proteins (PstB), two transmembrane proteins (PstC and PstA) and a solute-binding protein (PstS).

It is found in the cell inner membrane. The enzyme catalyses phosphate(out) + ATP + H2O = ADP + 2 phosphate(in) + H(+). Functionally, part of the ABC transporter complex PstSACB involved in phosphate import. Responsible for energy coupling to the transport system. This chain is Phosphate import ATP-binding protein PstB, found in Geobacter metallireducens (strain ATCC 53774 / DSM 7210 / GS-15).